Reading from the N-terminus, the 100-residue chain is Urease subunit gamma (100 aa).

It belongs to the urease gamma subunit family. In terms of assembly, heterotrimer of UreA (gamma), UreB (beta) and UreC (alpha) subunits. Three heterotrimers associate to form the active enzyme.

Its subcellular location is the cytoplasm. It carries out the reaction urea + 2 H2O + H(+) = hydrogencarbonate + 2 NH4(+). It participates in nitrogen metabolism; urea degradation; CO(2) and NH(3) from urea (urease route): step 1/1. The polypeptide is Urease subunit gamma (Micrococcus luteus (strain ATCC 4698 / DSM 20030 / JCM 1464 / CCM 169 / CCUG 5858 / IAM 1056 / NBRC 3333 / NCIMB 9278 / NCTC 2665 / VKM Ac-2230) (Micrococcus lysodeikticus)).